A 506-amino-acid polypeptide reads, in one-letter code: F-box protein At4g02760 (506 aa).

Positions 115 to 161 (TSWPLLPELTIKVFSMLDTKSLMQASACCTMFNKCAMDRVCYSHIDL) constitute an F-box domain. Residues 452 to 506 (TFVAEFRSPSPSESDVRSPSPSSSSDSSSSSDSSSSSSSGESSDESGTEEEEDED) are disordered. The segment covering 459-492 (SPSPSESDVRSPSPSSSSDSSSSSDSSSSSSSGE) has biased composition (low complexity). Acidic residues predominate over residues 493-506 (SSDESGTEEEEDED).

In Arabidopsis thaliana (Mouse-ear cress), this protein is F-box protein At4g02760.